The primary structure comprises 476 residues: Aspartyl/glutamyl-tRNA(Asn/Gln) amidotransferase subunit B (476 aa).

Belongs to the GatB/GatE family. GatB subfamily. In terms of assembly, heterotrimer of A, B and C subunits.

The enzyme catalyses L-glutamyl-tRNA(Gln) + L-glutamine + ATP + H2O = L-glutaminyl-tRNA(Gln) + L-glutamate + ADP + phosphate + H(+). It carries out the reaction L-aspartyl-tRNA(Asn) + L-glutamine + ATP + H2O = L-asparaginyl-tRNA(Asn) + L-glutamate + ADP + phosphate + 2 H(+). Its function is as follows. Allows the formation of correctly charged Asn-tRNA(Asn) or Gln-tRNA(Gln) through the transamidation of misacylated Asp-tRNA(Asn) or Glu-tRNA(Gln) in organisms which lack either or both of asparaginyl-tRNA or glutaminyl-tRNA synthetases. The reaction takes place in the presence of glutamine and ATP through an activated phospho-Asp-tRNA(Asn) or phospho-Glu-tRNA(Gln). The chain is Aspartyl/glutamyl-tRNA(Asn/Gln) amidotransferase subunit B from Clostridium botulinum (strain 657 / Type Ba4).